The chain runs to 715 residues: Interferon-induced GTP-binding protein Mx2 (715 aa).

The 273-residue stretch at 115–387 (DLALPAIAVI…LIMHIQKSLP (273 aa)) folds into the Dynamin-type G domain. The tract at residues 125-132 (GDQSSGKS) is G1 motif. 125-132 (GDQSSGKS) contributes to the GTP binding site. The tract at residues 150–152 (VTR) is G2 motif. The tract at residues 225 to 228 (DLPG) is G3 motif. Residues 225–229 (DLPGI) and 294–297 (TKPD) each bind GTP. Residues 294-297 (TKPD) form a G4 motif region. The interval 326–329 (KCRG) is G5 motif. The region spanning 623 to 714 (FTEIGIHLNA…ALCQFSSKEI (92 aa)) is the GED domain.

This sequence belongs to the TRAFAC class dynamin-like GTPase superfamily. Dynamin/Fzo/YdjA family.

The protein resides in the cytoplasm. It localises to the nucleus. The protein localises to the nuclear pore complex. Its function is as follows. Interferon-induced dynamin-like GTPase with potent antiviral activity against human immunodeficiency virus type 1 (HIV-1). Acts by targeting the viral capsid and affects the nuclear uptake and/or stability of the HIV-1 replication complex and the subsequent chromosomal integration of the proviral DNA. Exhibits antiviral activity also against simian immunodeficiency virus (SIV-mnd). May play a role in regulating nucleocytoplasmic transport and cell-cycle progression. The polypeptide is Interferon-induced GTP-binding protein Mx2 (MX2) (Homo sapiens (Human)).